The sequence spans 92 residues: YcgL domain-containing protein VC_1957 (92 aa).

Residues 1–84 (MLCSIYKSPK…PPENLLEQHK (84 aa)) form the YcgL domain. The interval 69–92 (FLQLPPPPENLLEQHKERKARQTP) is disordered.

In Vibrio cholerae serotype O1 (strain ATCC 39315 / El Tor Inaba N16961), this protein is YcgL domain-containing protein VC_1957.